Here is a 149-residue protein sequence, read N- to C-terminus: Inner membrane protein YfeZ (149 aa).

Residues 1–18 are Cytoplasmic-facing; sequence MKSTEFHPVHYDAHGRLR. Residues 19–39 form a helical membrane-spanning segment; the sequence is LPLLFWLVLLLQARTWVLFVI. At 40–58 the chain is on the periplasmic side; the sequence is AGASREQGTALLNLFYPDH. The helical transmembrane segment at 59–79 threads the bilayer; sequence DNFWLGLIPGIPAVLAFLLSG. The Cytoplasmic segment spans residues 80–89; the sequence is RRATFPRTWR. The helical transmembrane segment at 90 to 110 threads the bilayer; the sequence is VLYFLLLLAQVVLLCWQPWLW. Over 111-115 the chain is Periplasmic; the sequence is LNGES. A helical transmembrane segment spans residues 116 to 136; sequence VSGIGLALVVADIVALIWLLT. At 137 to 149 the chain is on the cytoplasmic side; that stretch reads NRRLRACFYEVKE.

The protein resides in the cell inner membrane. The chain is Inner membrane protein YfeZ (yfeZ) from Escherichia coli (strain K12).